The primary structure comprises 300 residues: Acetylglutamate kinase (300 aa).

Residues 68–69 (GG), Arg90, and Asn195 contribute to the substrate site.

The protein belongs to the acetylglutamate kinase family. ArgB subfamily.

It is found in the cytoplasm. It catalyses the reaction N-acetyl-L-glutamate + ATP = N-acetyl-L-glutamyl 5-phosphate + ADP. It functions in the pathway amino-acid biosynthesis; L-arginine biosynthesis; N(2)-acetyl-L-ornithine from L-glutamate: step 2/4. Functionally, catalyzes the ATP-dependent phosphorylation of N-acetyl-L-glutamate. The protein is Acetylglutamate kinase of Halorhodospira halophila (strain DSM 244 / SL1) (Ectothiorhodospira halophila (strain DSM 244 / SL1)).